We begin with the raw amino-acid sequence, 400 residues long: Tryptophan 2,3-dioxygenase (400 aa).

Substrate contacts are provided by residues 75-79 (FIIIH) and arginine 146. Position 332 (histidine 332) interacts with heme. Threonine 346 is a substrate binding site.

The protein belongs to the tryptophan 2,3-dioxygenase family. In terms of assembly, homotetramer. Dimer of dimers. It depends on heme as a cofactor.

It catalyses the reaction L-tryptophan + O2 = N-formyl-L-kynurenine. It participates in amino-acid degradation; L-tryptophan degradation via kynurenine pathway; L-kynurenine from L-tryptophan: step 1/2. In terms of biological role, heme-dependent dioxygenase that catalyzes the oxidative cleavage of the L-tryptophan (L-Trp) pyrrole ring and converts L-tryptophan to N-formyl-L-kynurenine. Catalyzes the oxidative cleavage of the indole moiety. This chain is Tryptophan 2,3-dioxygenase, found in Dictyostelium discoideum (Social amoeba).